The sequence spans 339 residues: Ketol-acid reductoisomerase (NADP(+)) (339 aa).

Residues 1–182 (MRVYYDRDAD…GGGRSGIIET (182 aa)) enclose the KARI N-terminal Rossmann domain. NADP(+)-binding positions include 24–27 (YGSQ), Lys48, Ser51, Thr53, and 83–86 (DELQ). Residue His108 is part of the active site. Gly134 serves as a coordination point for NADP(+). Residues 183–328 (NFREECETDL…AKLRGMMPWI (146 aa)) form the KARI C-terminal knotted domain. Mg(2+) is bound by residues Asp191, Glu195, Glu227, and Glu231. A substrate-binding site is contributed by Ser252.

It belongs to the ketol-acid reductoisomerase family. It depends on Mg(2+) as a cofactor.

It carries out the reaction (2R)-2,3-dihydroxy-3-methylbutanoate + NADP(+) = (2S)-2-acetolactate + NADPH + H(+). It catalyses the reaction (2R,3R)-2,3-dihydroxy-3-methylpentanoate + NADP(+) = (S)-2-ethyl-2-hydroxy-3-oxobutanoate + NADPH + H(+). It participates in amino-acid biosynthesis; L-isoleucine biosynthesis; L-isoleucine from 2-oxobutanoate: step 2/4. It functions in the pathway amino-acid biosynthesis; L-valine biosynthesis; L-valine from pyruvate: step 2/4. Functionally, involved in the biosynthesis of branched-chain amino acids (BCAA). Catalyzes an alkyl-migration followed by a ketol-acid reduction of (S)-2-acetolactate (S2AL) to yield (R)-2,3-dihydroxy-isovalerate. In the isomerase reaction, S2AL is rearranged via a Mg-dependent methyl migration to produce 3-hydroxy-3-methyl-2-ketobutyrate (HMKB). In the reductase reaction, this 2-ketoacid undergoes a metal-dependent reduction by NADPH to yield (R)-2,3-dihydroxy-isovalerate. The polypeptide is Ketol-acid reductoisomerase (NADP(+)) (Rhizobium rhizogenes (strain K84 / ATCC BAA-868) (Agrobacterium radiobacter)).